Here is a 631-residue protein sequence, read N- to C-terminus: Phosphomethylpyrimidine synthase (631 aa).

Substrate-binding positions include Asn-239, Met-268, Tyr-297, His-333, 353-355 (SRG), 394-397 (DGLR), and Glu-433. Position 437 (His-437) interacts with Zn(2+). A substrate-binding site is contributed by Tyr-460. Residue His-501 coordinates Zn(2+). Residues Cys-581, Cys-584, and Cys-589 each contribute to the [4Fe-4S] cluster site.

It belongs to the ThiC family. Homodimer. The cofactor is [4Fe-4S] cluster.

It catalyses the reaction 5-amino-1-(5-phospho-beta-D-ribosyl)imidazole + S-adenosyl-L-methionine = 4-amino-2-methyl-5-(phosphooxymethyl)pyrimidine + CO + 5'-deoxyadenosine + formate + L-methionine + 3 H(+). It functions in the pathway cofactor biosynthesis; thiamine diphosphate biosynthesis. Its function is as follows. Catalyzes the synthesis of the hydroxymethylpyrimidine phosphate (HMP-P) moiety of thiamine from aminoimidazole ribotide (AIR) in a radical S-adenosyl-L-methionine (SAM)-dependent reaction. The sequence is that of Phosphomethylpyrimidine synthase from Salmonella paratyphi A (strain AKU_12601).